A 487-amino-acid chain; its full sequence is uncharacterized protein (487 aa).

Disordered stretches follow at residues 35 to 153 (VSRK…SGDQ), 237 to 345 (NTTK…AKAL), and 358 to 395 (QKRK…SSAA). Residues 54-96 (FDQEDILDTVPEQTDENEDEAGDDELESEKEELDYDEEEDDED) are compositionally biased toward acidic residues. The span at 97–132 (RRERTSRYTSEKKGSRKDSVEGDENKKENGQDETKR) shows a compositional bias: basic and acidic residues. Residues 241-253 (SKSRGRDTRKRRS) show a composition bias toward basic residues. A compositionally biased stretch (low complexity) spans 254-264 (SSYSSTSSSSD). 2 stretches are compositionally biased toward basic and acidic residues: residues 273 to 338 (SRSD…KHSA) and 358 to 383 (QKRK…KKEV). Over residues 385–395 (TTVSTNTSSAA) the composition is skewed to low complexity.

This is an uncharacterized protein from Caenorhabditis elegans.